The primary structure comprises 245 residues: Outer dense fiber protein 1 (245 aa).

A phosphoserine mark is found at serine 5 and serine 10. Residues 34–38 (RCLCD) form repeat 1. Residues 34 to 78 (RCLCDLYMHPYCCCDLHPYPYCLCYSKRSRSCGLCDLYYPCCLCD) are 2 X 5 AA repeats of [RC]-C-L-C-D. Position 64 is a phosphoserine (serine 64). Copy 2 of the repeat occupies 74 to 78 (CCLCD). Phosphoserine is present on residues serine 87, serine 108, serine 109, serine 137, serine 153, serine 175, and serine 180. A C-X-P repeat region region spans residues 195–233 (CNPCNPCSPCSPCGPCGPCGPCGPCGPCGPCDPCNPCYP).

As to quaternary structure, interacts (via leucine zipper motif) with TCP11. Interacts with SPAG4. Interacts with KLC3. Interacts with CCDC42. Testis. Specifically located to the round spermatid layer and to the luminally-oriented cytoplasm of elongated spermatids.

It localises to the cell projection. It is found in the cilium. The protein localises to the flagellum. Its subcellular location is the cytoplasm. The protein resides in the cytoskeleton. It localises to the microtubule organizing center. It is found in the centrosome. Functionally, component of the outer dense fibers (ODF) of spermatozoa. ODF are filamentous structures located on the outside of the axoneme in the midpiece and principal piece of the mammalian sperm tail and may help to maintain the passive elastic structures and elastic recoil of the sperm tail. The sequence is that of Outer dense fiber protein 1 (Odf1) from Rattus norvegicus (Rat).